We begin with the raw amino-acid sequence, 446 residues long: Maltoporin (446 aa).

An N-terminal signal peptide occupies residues 1–25 (MMITLRKLPLAVAVAAGVMSAQAMA).

Belongs to the porin LamB (TC 1.B.3) family. In terms of assembly, homotrimer formed of three 18-stranded antiparallel beta-barrels, containing three independent channels.

It is found in the cell outer membrane. It catalyses the reaction beta-maltose(in) = beta-maltose(out). Its function is as follows. Involved in the transport of maltose and maltodextrins. This is Maltoporin from Escherichia coli (strain K12 / MC4100 / BW2952).